We begin with the raw amino-acid sequence, 311 residues long: Olfactory receptor 4S2 (311 aa).

The Extracellular segment spans residues 1–23 (MEKINNVTEFIFWGLSQSPEIEK). N6 carries N-linked (GlcNAc...) asparagine glycosylation. A helical transmembrane segment spans residues 24 to 47 (VCFVVFSFFYIIILLGNLLIMLTV). At 48–55 (CLSNLFKS) the chain is on the cytoplasmic side. A helical membrane pass occupies residues 56-77 (PMYFFLSFLSFVDICYSSVTAP). At 78 to 98 (KMIVDLLAKDKTISYVGCMLQ) the chain is on the extracellular side. C95 and C187 are joined by a disulfide. A helical membrane pass occupies residues 99-118 (LFGVHFFGCTEIFILTVMAY). The Cytoplasmic segment spans residues 119-137 (DRYVAICKPLHYMTIMNRE). The chain crosses the membrane as a helical span at residues 138–156 (TCNKMLLGTWVGGFLHSII). Topologically, residues 157-193 (QVALVVQLPFCGPNEIDHYFCDVHPVLKLACTETYIV) are extracellular. The helical transmembrane segment at 194–217 (GVVVTANSGTIALGSFVILLISYS) threads the bilayer. Residues 218–233 (IILVSLRKQSAEGRRK) are Cytoplasmic-facing. The helical transmembrane segment at 234-256 (ALSTCGSHIAMVVIFFGPCTFMY) threads the bilayer. Residues 257 to 267 (MRPDTTFSEDK) lie on the Extracellular side of the membrane. Residues 268–287 (MVAVFYTIITPMLNPLIYTL) form a helical membrane-spanning segment. Over 288-311 (RNAEVKNAMKKLWGRNVFLEAKGK) the chain is Cytoplasmic.

The protein belongs to the G-protein coupled receptor 1 family.

The protein localises to the cell membrane. In terms of biological role, odorant receptor. This is Olfactory receptor 4S2 (OR4S2) from Homo sapiens (Human).